Consider the following 251-residue polypeptide: Fibroblast growth factor 23 (251 aa).

An N-terminal signal peptide occupies residues 1–24 (MLGTCLRLLVGVLCTVCSLGTARA). Cysteine 95 and cysteine 113 are joined by a disulfide. Residues threonine 171 and threonine 178 are each glycosylated (O-linked (GalNAc) threonine). The tract at residues 175–251 (RRHTRSAEDP…DRCRPFPRFV (77 aa)) is disordered. The span at 179-189 (RSAEDPPERDP) shows a compositional bias: basic and acidic residues. Serine 180 bears the Phosphoserine; by FAM20C mark.

It belongs to the heparin-binding growth factors family. In terms of assembly, interacts with FGFR1. Interacts with FGFR2, FGFR3 and FGFR4. Affinity between fibroblast growth factors (FGFs) and their receptors is increased by KL and heparan sulfate glycosaminoglycans that function as coreceptors. In terms of processing, following secretion this protein is inactivated by cleavage into a N-terminal fragment and a C-terminal fragment. The processing is effected by proprotein convertases. O-glycosylated at Thr-171 and Thr-178 by GALNT3 and glycosylation of Thr-178 requires previous glycosylation at Thr171. Glycosylation is necessary for secretion; it blocks processing by proprotein convertases when the O-glycan is alpha 2,6-sialylated. Competition between proprotein convertase cleavage and block of cleavage by O-glycosylation determines the level of secreted active FGF23. Post-translationally, phosphorylation at Ser-180 mediated by FAM20C slows down glycosylation at Thr-178 notably. In terms of tissue distribution, mainly expressed in the brain and thymus at low levels. In brain; preferentially expressed in the ventrolateral thalamic nucleus.

The protein localises to the secreted. In terms of biological role, regulator of phosphate homeostasis. Inhibits renal tubular phosphate transport by reducing SLC34A1 levels. Acts directly on the parathyroid to decrease PTH secretion. Regulator of vitamin-D metabolism. Negatively regulates osteoblasts differentiation and matrix mineralization. Up-regulates EGR1 expression in the presence of KL. The sequence is that of Fibroblast growth factor 23 (Fgf23) from Mus musculus (Mouse).